The primary structure comprises 524 residues: G1/S-specific cyclin-E (524 aa).

Residues M1–E155 form a disordered region. Residues K18 to I47 are compositionally biased toward basic and acidic residues. Residues P48–S62 are compositionally biased toward polar residues. 3 stretches are compositionally biased toward basic and acidic residues: residues D63–A78, K86–S95, and E146–E155.

The protein belongs to the cyclin family. Cyclin E subfamily. In terms of assembly, interacts with a member of the CDK2/CDK protein kinases to form a serine/threonine kinase holoenzyme complex. The cyclin subunit imparts substrate specificity to the complex. Expressed dynamically in proliferating cells throughout development. Detectable in larval blast cells undergoing active proliferation that give rise to all tissue types, including germline, intestine, hypodermis, neurons, and muscle.

Its subcellular location is the nucleus. The protein localises to the cytoplasm. It localises to the cytoskeleton. The protein resides in the microtubule organizing center. It is found in the centrosome. Its subcellular location is the centriole. Essential for the control of the cell cycle at the G1/S (start) transition. In association with cdk-2, regulates proliferation, quiescent state and cell fate during the development of several cell lineages. In the embryo, initiates the establishment of cell polarity through the recruitment of the centrosomal proteins spd-2 and spd-5 during prophase. During the development of the vulva, controls the onset of vulval cell terminal differentiation by controlling the duration of G1 phase. During hypoderm development at early larval stages, controls syncytial fate of seam cell daughter cells. Involved in the progression of cell division in the intestinal lineage in larvae, and in particular in endoreplication, a specific growth pathway in the intestinal epithelium, required for feeding and gut development in growing larvae. By controlling the activity of translational repressor gld-1, regulates the pool of germline stem cells and the size of the mitotic zone by preventing entry into meiosis. In addition, repression of expression by gld-1 prevents mitosis re-entry in meiotic germline cells. This is G1/S-specific cyclin-E from Caenorhabditis elegans.